The primary structure comprises 278 residues: Probable ribosomal RNA small subunit methyltransferase A (278 aa).

S-adenosyl-L-methionine is bound by residues His-25, Met-27, Gly-52, Glu-73, Asp-98, and Asn-114.

This sequence belongs to the class I-like SAM-binding methyltransferase superfamily. rRNA adenine N(6)-methyltransferase family. RsmA subfamily.

The protein resides in the cytoplasm. Its function is as follows. Specifically dimethylates two adjacent adenosines in the loop of a conserved hairpin near the 3'-end of 16S rRNA in the 30S particle. May play a critical role in biogenesis of 30S subunits. This chain is Probable ribosomal RNA small subunit methyltransferase A, found in Methanopyrus kandleri (strain AV19 / DSM 6324 / JCM 9639 / NBRC 100938).